Here is a 250-residue protein sequence, read N- to C-terminus: 5'-nucleotidase SurE (250 aa).

A divalent metal cation-binding residues include aspartate 8, aspartate 9, serine 40, and asparagine 94.

This sequence belongs to the SurE nucleotidase family. A divalent metal cation serves as cofactor.

It is found in the cytoplasm. It catalyses the reaction a ribonucleoside 5'-phosphate + H2O = a ribonucleoside + phosphate. Its function is as follows. Nucleotidase that shows phosphatase activity on nucleoside 5'-monophosphates. This chain is 5'-nucleotidase SurE, found in Wolbachia sp. subsp. Drosophila simulans (strain wRi).